A 359-amino-acid polypeptide reads, in one-letter code: MQVLRHSEHTLKTALLSKNPDLVSQYEKLDAGEQRLMNEAFQPRNNLFEPITLHSQSDWISSHPEAPQDFEQFFSDRYRKAPCPKKHIIYIQPIGFLGNTRVISEEYIKWLKGYCEAFFYGLKVKFLEPVSVSATKCSFRVNENTQNLQIHTGHILAFLKRNKPEDAFCIVGITMIDLYPRDSWNFVFGQASLSSGVGIFSFARYGKDFYTSKYEGSVKVPQRTVSSDYSIFDNYYIPEITSVLLLRSCKTLTHEIGHILGLRHCQWLACLMQGSNHLEESDRRPLNVCPICLRKLQSAIGFNIVERYKALVKWIDDESCGESGATPKSSSEHVYLPKPVEAFKDWREWILRCIAVLEK.

Zn(2+) is bound at residue histidine 254. Glutamate 255 acts as the Proton acceptor in catalysis. Zn(2+) contacts are provided by histidine 258, histidine 264, cysteine 265, cysteine 270, cysteine 289, and cysteine 292.

Belongs to the peptidase M54 family. Zn(2+) serves as cofactor.

In terms of biological role, probable zinc metalloprotease. The polypeptide is Archaemetzincin-2 (Amz2) (Rattus norvegicus (Rat)).